A 77-amino-acid chain; its full sequence is Acyl carrier protein (77 aa).

Positions 1-76 constitute a Carrier domain; it reads MENFDKVKDI…DAVKFINSLE (76 aa). Residue S36 is modified to O-(pantetheine 4'-phosphoryl)serine.

It belongs to the acyl carrier protein (ACP) family. Post-translationally, 4'-phosphopantetheine is transferred from CoA to a specific serine of apo-ACP by AcpS. This modification is essential for activity because fatty acids are bound in thioester linkage to the sulfhydryl of the prosthetic group.

It is found in the cytoplasm. It participates in lipid metabolism; fatty acid biosynthesis. In terms of biological role, carrier of the growing fatty acid chain in fatty acid biosynthesis. The protein is Acyl carrier protein of Staphylococcus aureus (strain Mu3 / ATCC 700698).